The primary structure comprises 117 residues: Ribonuclease P protein component 4 (117 aa).

4 residues coordinate Zn(2+): Cys64, Cys67, Cys93, and Cys96.

This sequence belongs to the eukaryotic/archaeal RNase P protein component 4 family. Consists of a catalytic RNA component and at least 4-5 protein subunits. Zn(2+) serves as cofactor.

The protein resides in the cytoplasm. It carries out the reaction Endonucleolytic cleavage of RNA, removing 5'-extranucleotides from tRNA precursor.. Functionally, part of ribonuclease P, a protein complex that generates mature tRNA molecules by cleaving their 5'-ends. The polypeptide is Ribonuclease P protein component 4 (Pyrococcus abyssi (strain GE5 / Orsay)).